We begin with the raw amino-acid sequence, 816 residues long: Coiled-coil and C2 domain-containing protein 1-like (816 aa).

The segment covering Met-1–Lys-11 has biased composition (basic and acidic residues). Disordered regions lie at residues Met-1–Pro-135, Ala-157–Lys-176, and Ala-186–Asp-269. Positions Ile-25–Ala-47 are enriched in acidic residues. Over residues Asp-73–Val-85 the composition is skewed to basic and acidic residues. A compositionally biased stretch (acidic residues) spans Ser-86 to Leu-100. Residues Pro-122 to Gln-131 are compositionally biased toward low complexity. The DM14 1 stretch occupies residues Ile-145–Val-200. Residues Pro-220–Pro-243 are compositionally biased toward pro residues. DM14 stretches follow at residues Ser-265 to Pro-317 and Leu-365 to Pro-419. A coiled-coil region spans residues Leu-355–Glu-382. The disordered stretch occupies residues Val-418–Asn-492. The span at Pro-424–Val-433 shows a compositional bias: low complexity. Over residues Ala-434–Thr-449 the composition is skewed to pro residues. Low complexity predominate over residues Ala-450–Lys-471. Residues Thr-483 to Asn-492 show a composition bias toward polar residues. Residues Leu-502 to Pro-556 form a DM14 4 region. A C2 domain is found at Arg-637–Tyr-776.

This sequence belongs to the CC2D1 family. Interacts (via DM14 domains 1 and 3) with shrb; the interaction is direct and blocks access to the surface involved in shrb polymerization. This interaction may be required for the ESCRT-III complex role in multivesicular body formation.

The protein resides in the cytoplasm. It is found in the cytosol. The protein localises to the apicolateral cell membrane. It localises to the cell cortex. Its subcellular location is the endosome. Its function is as follows. Phosphatidyl inositol monophosphate binding protein involved in endosomal protein sorting through regulation of the endosomal sorting required for transport (ESCRT) pathway. Required for full activity of the ESCRT-III complex core component shrb/shrub, probably by preventing its inappropriate polymerisation. Required, but not essential, for the efficient generation of intraluminal vesicles (ILVs) in multivesicular bodies (MVBs). Involved in a late stage of the endosomal pathway targeting transmembrane proteins of the plasma membrane for lysosomal degradation. Plays a critical role in regulation of multiple signal transduction pathways, including the Notch and BMP/decapentaplegic (dpp) signaling pathways, through targeting of membrane bound receptors to multivesicular bodies, isolating them from the cytoplasm and targeting them for lysosomal degradation. Involved in targeting N/Notch for endosomal degradation, negatively regulating the Notch signaling pathway. Regulates Notch signaling in imaginal disk cells and follicle cells during oogenesis and multiple developmental processes, including development of wings, veins, legs, eyes and bristles. Restricts the activity of Notch to the dorsoventral (D/V) boundary of the wing imaginal disk. In external sensory organ development regulates Notch signaling during asymmetric cell division and differentiation of sensory organ precursor cells. May be involved in regulation of apoptosis and cell growth independent of Notch signaling. Involved in targeting tkv for endosomal degradation, negatively regulating the BMP/decapentaplegic (dpp) signaling pathway. Regulates the BMP/dpp signaling pathway in follicle cells during oogenesis, but not in imaginal disk cells during wing development. May be involved in differentiation or morphogenesis of peripodial epithelial cells in the developing imaginal disk. Involved in abscission of germline cells during oogenesis. The protein is Coiled-coil and C2 domain-containing protein 1-like of Drosophila melanogaster (Fruit fly).